Consider the following 455-residue polypeptide: Bifunctional protein GlmU (455 aa).

Positions 1 to 226 (MSLEIVILAA…PMEVQGANDR (226 aa)) are pyrophosphorylase. UDP-N-acetyl-alpha-D-glucosamine is bound by residues 8–11 (LAAG), Lys22, Gln73, 78–79 (GT), 99–101 (YGD), Gly136, Glu151, Asn166, and Asn224. Residue Asp101 participates in Mg(2+) binding. Asn224 contacts Mg(2+). Positions 227–247 (KQLSELERHYQLRAGRRLMAQ) are linker. The segment at 248-455 (GVTLRDPARF…WKRPEKIKKN (208 aa)) is N-acetyltransferase. UDP-N-acetyl-alpha-D-glucosamine contacts are provided by Arg330 and Lys348. The active-site Proton acceptor is the His360. Residues Tyr363 and Asn374 each coordinate UDP-N-acetyl-alpha-D-glucosamine. Residues Ala377, 383–384 (NY), Ser402, Ala420, and Arg437 each bind acetyl-CoA.

This sequence in the N-terminal section; belongs to the N-acetylglucosamine-1-phosphate uridyltransferase family. The protein in the C-terminal section; belongs to the transferase hexapeptide repeat family. In terms of assembly, homotrimer. The cofactor is Mg(2+).

The protein localises to the cytoplasm. It catalyses the reaction alpha-D-glucosamine 1-phosphate + acetyl-CoA = N-acetyl-alpha-D-glucosamine 1-phosphate + CoA + H(+). The catalysed reaction is N-acetyl-alpha-D-glucosamine 1-phosphate + UTP + H(+) = UDP-N-acetyl-alpha-D-glucosamine + diphosphate. It participates in nucleotide-sugar biosynthesis; UDP-N-acetyl-alpha-D-glucosamine biosynthesis; N-acetyl-alpha-D-glucosamine 1-phosphate from alpha-D-glucosamine 6-phosphate (route II): step 2/2. It functions in the pathway nucleotide-sugar biosynthesis; UDP-N-acetyl-alpha-D-glucosamine biosynthesis; UDP-N-acetyl-alpha-D-glucosamine from N-acetyl-alpha-D-glucosamine 1-phosphate: step 1/1. Its pathway is bacterial outer membrane biogenesis; LPS lipid A biosynthesis. Functionally, catalyzes the last two sequential reactions in the de novo biosynthetic pathway for UDP-N-acetylglucosamine (UDP-GlcNAc). The C-terminal domain catalyzes the transfer of acetyl group from acetyl coenzyme A to glucosamine-1-phosphate (GlcN-1-P) to produce N-acetylglucosamine-1-phosphate (GlcNAc-1-P), which is converted into UDP-GlcNAc by the transfer of uridine 5-monophosphate (from uridine 5-triphosphate), a reaction catalyzed by the N-terminal domain. This is Bifunctional protein GlmU from Pseudomonas fluorescens (strain Pf0-1).